An 817-amino-acid polypeptide reads, in one-letter code: Disks large homolog 3 (817 aa).

2 positions are modified to N-acetylmethionine: methionine 1 and histidine 2. Residues 33-101 (WQVPDPYGPG…GKSTPKLNGS (69 aa)) form a disordered region. The span at 40–53 (GPGGGNGASAGYGG) shows a compositional bias: gly residues. Residues 57-69 (QTLPSQAGATPTP) show a composition bias toward polar residues. 3 consecutive PDZ domains span residues 130–217 (EEIV…VRRR), 226–311 (EVNL…KVAK), and 379–465 (DFTR…VAQY). Serine 139 bears the Phosphoserine mark. Residues 501–571 (KRSLYVRALF…PSKKRVEKKE (71 aa)) form the SH3 domain. In terms of domain architecture, Guanylate kinase-like spans 627–802 (ARPVIILGPM…IYNKIKQIIE (176 aa)). The residue at position 673 (tyrosine 673) is a Phosphotyrosine.

This sequence belongs to the MAGUK family. As to quaternary structure, interacts through its PDZ domains with NETO1, GRIN2B and SYNGAP1. Interacts through its guanylate kinase-like domain with DLGAP1, DLGAP2, DLGAP3 and DLGAP4. Interacts with FLTP/C1orf192. Interacts through its PDZ domains with APC. Interacts through its first two PDZ domains with ERBB4. Interacts through its third PDZ domain with NLGN1, and probably with NLGN2 and NLGN3. Interacts with FRMPD4 (via C-terminus). Interacts with LRFN1, LRFN2 and LRFN4. Interacts with DGKI (via PDZ-binding motif).

Required for learning most likely through its role in synaptic plasticity following NMDA receptor signaling. The sequence is that of Disks large homolog 3 (DLG3) from Homo sapiens (Human).